A 382-amino-acid polypeptide reads, in one-letter code: uncharacterized protein (382 aa).

The next 12 membrane-spanning stretches (helical) occupy residues 14 to 34 (GLLL…LWLA), 45 to 65 (VVSS…GYVI), 75 to 95 (YLAS…IGFW), 102 to 122 (FVAG…LMCS), 131 to 151 (LLAA…LLVS), 157 to 177 (LMSV…PLLF), 206 to 226 (VNGC…MPLF), 235 to 255 (ASIG…QWPI), 270 to 290 (VQVF…AMAP), 291 to 311 (ALFI…AWAC), 325 to 345 (ALLL…AMLM), and 348 to 368 (FSDN…LLML).

Belongs to the major facilitator superfamily. YcaD (TC 2.A.1.26) family.

The protein resides in the cell inner membrane. This is an uncharacterized protein from Escherichia coli O17:K52:H18 (strain UMN026 / ExPEC).